The following is a 342-amino-acid chain: MAIKVGINGFGRIGRSFFRASWGREEIEIVAINDLTDAKHLAHLLKYDSVHGIFKGSVEAKDDSIVVDGKEIKVFAQKDPSQIPWGDLGVDVVIEATGVFRDRENASKHLQGGAKKVIITAPAKNPDITVVLGVNEEKYNPKEHNIISNASCTTNCLAPCVKVLNEAFGVEKGYMVTVHAYTNDQRLLDLPHKDFRRARAAAINIVPTTTGAAKAIGEVIPELKGKLDGTARRVPVPDGSLIDLTVVVNKAPSSVEEVNEKFREAAQKYRESGKVYLKEILQYCEDPIVSTDIVGNPHSAIFDAPLTQVIDNLVHIAAWYDNEWGYSCRLRDLVIYLAERGL.

Residues 12 to 13 (RI), aspartate 34, lysine 78, and threonine 120 contribute to the NAD(+) site. D-glyceraldehyde 3-phosphate is bound by residues 151–153 (SCT) and threonine 182. Residue cysteine 152 is the Nucleophile of the active site. An NAD(+)-binding site is contributed by asparagine 183. Residues arginine 197, 210-211 (TG), and arginine 233 contribute to the D-glyceraldehyde 3-phosphate site. Asparagine 322 serves as a coordination point for NAD(+).

The protein belongs to the glyceraldehyde-3-phosphate dehydrogenase family. In terms of assembly, homotetramer.

The protein localises to the cytoplasm. The enzyme catalyses D-glyceraldehyde 3-phosphate + phosphate + NAD(+) = (2R)-3-phospho-glyceroyl phosphate + NADH + H(+). It functions in the pathway carbohydrate degradation; glycolysis; pyruvate from D-glyceraldehyde 3-phosphate: step 1/5. Its function is as follows. Catalyzes the oxidative phosphorylation of glyceraldehyde 3-phosphate (G3P) to 1,3-bisphosphoglycerate (BPG) using the cofactor NAD. The first reaction step involves the formation of a hemiacetal intermediate between G3P and a cysteine residue, and this hemiacetal intermediate is then oxidized to a thioester, with concomitant reduction of NAD to NADH. The reduced NADH is then exchanged with the second NAD, and the thioester is attacked by a nucleophilic inorganic phosphate to produce BPG. This chain is Glyceraldehyde-3-phosphate dehydrogenase (gap), found in Aquifex aeolicus (strain VF5).